The following is a 507-amino-acid chain: Probable DNA ligase (507 aa).

E209 is a binding site for ATP. K211 (N6-AMP-lysine intermediate) is an active-site residue. 6 residues coordinate ATP: R216, R231, E260, F300, R372, and K378.

This sequence belongs to the ATP-dependent DNA ligase family. It depends on Mg(2+) as a cofactor.

The catalysed reaction is ATP + (deoxyribonucleotide)n-3'-hydroxyl + 5'-phospho-(deoxyribonucleotide)m = (deoxyribonucleotide)n+m + AMP + diphosphate.. Its function is as follows. DNA ligase that seals nicks in double-stranded DNA during DNA replication, DNA recombination and DNA repair. The sequence is that of Probable DNA ligase from Mycobacterium bovis (strain ATCC BAA-935 / AF2122/97).